We begin with the raw amino-acid sequence, 1922 residues long: MDNNNNNNNNNNDKNDKNELNKIKVAIRVRPLNSRELGIDQKIPWSISKDTISLSQNPNINFTYDYVFGIDSNTIDVYNAIAKSIVNSSLNGINGTIFAYGQTSSGKTFSMRGTESIPGIIKLSIKDIFKSIEDSILEKDYLLKVSYLEIYNEEIKDLLNPTISNKKKLKIHEDIYKGVVVANLKEEIVISPDQIFALMNFGEERRHIGSTMMNDSSSRSHTIFRMQIQSTCKQNGTIQMSTLTLVDLAGSERVSSTGAEGVRLKEGTHINKSLMTLSKVISKLSEEKTQQHVPYRDSKLTRILQPSLGGNSKTAILCTITPATTHQEESISTLQFAKRAKRVKTNYKINQVADANTMLKKYESEILELQNQLVKSEEINSLLRNTISTQEISSNNFKLGMKRFNDAIIGGSLINENKKKKKRRNTLDPSYLLKDKIIKKKIRKSENQKIKKIKNSENNISSSSSNSSGEEDDDDKDDENNYSINQDDKDDSNYEDDDDEDEDDDEESDTDNEDDEDNDEDNDDDDDDDDEFKDNLNLIEPLDDETIKKIKDLDDSLGISGQVKVKREDLDLIYEELEENKKLIEEYESTLELLNNQLDEKEIEHKELLIIIDQWEQECTNRENQNQELLEIDQQSKQSIQQLNDKLLETKQQSKQSIDQLNLQLIDIESESSKNKKSFENVLGVFEKSYRLAERLEDKYFTKEIESKKQIETLANSYLQLETTYQQQLNINQQSQQKIQSLNNDIEQFKLVWVPLKDQVNGYFQENQMFKQYIIELEEKYNTLIDLQKEVEQNYLTNTLEQQRNDQYQIEINQLTTEYNNQIQQLESTNQKLQTQLYNLLANATQSTQTLEQQLQTSKQEIDTLTNEIEQLKNQYDIIRVDNDNLSKESLELKQILLSKTQQLEEQLSLAQQQKGNIEIIQQLESIIVDNQQSIDQLKIEFDQSQQDNQSIKQSYNQLESTLTLAQSENQRLLTENKQFITSLNEIKSLFNSIQQQKETIQLEFNQRLQSWSLDSEKYKEIISTLEQSNQKSIESYESKSLEFQEKENQFDSLLTNYNQLFSKYNDLATSNESNRLEFDQFKKDSNQSIQSLESLERSLKSENDNLLQQSNLLKSQLESIEKQKQDQLIPIQLELESKKCELSKLSSQFSEQTKQVTQLLISVDQYKISTNKLESQISDRNEEINNLKLKAIEINALKEENISLKDQLTKLKKAPKSQTDREKDMIKKELEKLREKFNAIDAKLKQAIQDKQTIQSEKQSLEREIKDLKRSHTSTETELDKLKKTHLAADVKSKDFIALNKSVEILTKSQEQLKSTIIELESDLSKKNIELEKKQEELVTLNQDKLEKEKKTNQLESDHSSATIKLENYENQITQLTSEIIDLKSKFQEFKSESESNIKQQEINLKESNDLNQQLTNDKFELTKQLSDLKVEFDKSKQLWSTRSSESNDTIKELQESIISKDKERQLTSEQLVKLTDQINLKTWEYNDLNSQCQQLTKTLQNVKSSNEQQEQSIVSLESQTSAKIKSLELEISQIQENHRLEVLELNRCKNQLSEKQTLMEQDNIQLNERIIQLLHQKTKHENEILSMESNIIDLENQTKELKSKIETAQQDFEIEKNYHTGLNETNTTTIKTMNEELTRSNQTIQQLLFKISKLEQTSLQTQQQQELQQATISAQQQKQQQLADDQEKQQLYQKIKLIEKELESTKQKNLYITEQFTLKESEYLDTITDYVCKEKEFEKSKASLKTSATKIQALNDIIKKLQEEKPQQQPVVKVSSSQVVNQNGQPIKSILKKPKLVIIPREQLQQPPQFKELTLSTLNSNDSNCEPESVSASSTLTSLQSISKYIGKRSEQTTLEHDLTSSTLNLPLQQQNKKVRLVITKNNKTSTDNLTTTSTSLKSKSSSNGENKENQNNNIIIKNN.

The 322-residue stretch at 22–343 (KIKVAIRVRP…LQFAKRAKRV (322 aa)) folds into the Kinesin motor domain. 101-108 (GQTSSGKT) serves as a coordination point for ATP. The tract at residues 448–538 (QKIKKIKNSE…DDEFKDNLNL (91 aa)) is disordered. The segment covering 456-468 (SENNISSSSSNSS) has biased composition (low complexity). 2 stretches are compositionally biased toward acidic residues: residues 469 to 480 (GEEDDDDKDDEN) and 488 to 532 (DKDD…DDEF). Positions 562-1712 (QVKVKREDLD…ELESTKQKNL (1151 aa)) form a coiled coil. The segment at 1887–1922 (TSTDNLTTTSTSLKSKSSSNGENKENQNNNIIIKNN) is disordered.

The protein belongs to the TRAFAC class myosin-kinesin ATPase superfamily. Kinesin family.

It is found in the cytoplasm. The protein localises to the cytoskeleton. Its function is as follows. Microtubule-associated force-producing protein that plays a role in organelle transport. Its motor activity is directed toward the microtubule's plus end. Cooperates with dynein in organizing spindle assembly during cell division. In Dictyostelium discoideum (Social amoeba), this protein is Kinesin-related protein 4 (kif4).